Reading from the N-terminus, the 650-residue chain is Acetyl-coenzyme A synthetase (650 aa).

Residues 191–194 (RAGR), Thr311, and Asn335 each bind CoA. ATP is bound by residues 387–389 (GEP), 411–416 (DTWWQT), Asp500, and Arg515. Ser523 contacts CoA. ATP is bound at residue Arg526. Residues Val537, His539, and Val542 each coordinate Mg(2+). Arg584 is a CoA binding site. Residue Lys609 is modified to N6-acetyllysine.

The protein belongs to the ATP-dependent AMP-binding enzyme family. Mg(2+) is required as a cofactor. In terms of processing, acetylated. Deacetylation by the SIR2-homolog deacetylase activates the enzyme.

It catalyses the reaction acetate + ATP + CoA = acetyl-CoA + AMP + diphosphate. Catalyzes the conversion of acetate into acetyl-CoA (AcCoA), an essential intermediate at the junction of anabolic and catabolic pathways. AcsA undergoes a two-step reaction. In the first half reaction, AcsA combines acetate with ATP to form acetyl-adenylate (AcAMP) intermediate. In the second half reaction, it can then transfer the acetyl group from AcAMP to the sulfhydryl group of CoA, forming the product AcCoA. The protein is Acetyl-coenzyme A synthetase of Shewanella pealeana (strain ATCC 700345 / ANG-SQ1).